The primary structure comprises 467 residues: MSIGNIVQCIGAVVDIEFPRDAMPKVYDALVLEDSSDASFAEKGLTFEVQQQLGDGVVRTIALGSSDGLRRGMAVKSTGAPISVPVGHGTLGRIMDVLGRPIDEAGPIASDELRAIHQKAPKFDELSPSVDLLETGIKVIDLVCPFAKGGKVGLFGGAGVGKTVNMMELINNIAKQHSGLSVFAGVGERTREGNDFYHEMKDSNVLDKVAMVFGQMNEPPGNRLRVALTGLTMAERFRDEGRDILFFVDNIYRYTLAGTEVSALLGRMPSAVGYQPTLAEEMGKLQERITSTKTGSITSIQAVYVPADDLTDPSPATTFLHLDSTVVLSRDIAALGIYPAVDPLDSTSRQLDPQVVGTEHYEVARRVQQTLQRYKELRDIIAILGMDELSPEDKLAVSRARKIQRFLSQPFHVAEVFTGSPGKYVPLKETIRGFKMLVDGECDHLPEQAFYMVGSIDEAFEKAKKLQ.

156–163 is an ATP binding site; it reads GGAGVGKT.

It belongs to the ATPase alpha/beta chains family. F-type ATPases have 2 components, CF(1) - the catalytic core - and CF(0) - the membrane proton channel. CF(1) has five subunits: alpha(3), beta(3), gamma(1), delta(1), epsilon(1). CF(0) has three main subunits: a(1), b(2) and c(9-12). The alpha and beta chains form an alternating ring which encloses part of the gamma chain. CF(1) is attached to CF(0) by a central stalk formed by the gamma and epsilon chains, while a peripheral stalk is formed by the delta and b chains.

It is found in the cell inner membrane. The catalysed reaction is ATP + H2O + 4 H(+)(in) = ADP + phosphate + 5 H(+)(out). Its function is as follows. Produces ATP from ADP in the presence of a proton gradient across the membrane. The catalytic sites are hosted primarily by the beta subunits. This Cupriavidus taiwanensis (strain DSM 17343 / BCRC 17206 / CCUG 44338 / CIP 107171 / LMG 19424 / R1) (Ralstonia taiwanensis (strain LMG 19424)) protein is ATP synthase subunit beta.